We begin with the raw amino-acid sequence, 151 residues long: Protein A151R (151 aa).

Residues histidine 102, cysteine 109, cysteine 132, and cysteine 135 each coordinate Zn(2+). Positions 131–135 (WCTKC) match the Thioredoxin WCTKC motif motif.

This sequence belongs to the asfivirus A151R family. As to quaternary structure, monomer. Homodimer. Interacts with protein B119L. Interacts with membrane protein E248R. It depends on Zn(2+) as a cofactor.

Functionally, may participate in a redox cascade for the formation of disulfide bonds in viral proteins. This chain is Protein A151R, found in African swine fever virus (strain Badajoz 1971 Vero-adapted) (Ba71V).